Consider the following 147-residue polypeptide: SsrA-binding protein (147 aa).

It belongs to the SmpB family.

The protein resides in the cytoplasm. Its function is as follows. Required for rescue of stalled ribosomes mediated by trans-translation. Binds to transfer-messenger RNA (tmRNA), required for stable association of tmRNA with ribosomes. tmRNA and SmpB together mimic tRNA shape, replacing the anticodon stem-loop with SmpB. tmRNA is encoded by the ssrA gene; the 2 termini fold to resemble tRNA(Ala) and it encodes a 'tag peptide', a short internal open reading frame. During trans-translation Ala-aminoacylated tmRNA acts like a tRNA, entering the A-site of stalled ribosomes, displacing the stalled mRNA. The ribosome then switches to translate the ORF on the tmRNA; the nascent peptide is terminated with the 'tag peptide' encoded by the tmRNA and targeted for degradation. The ribosome is freed to recommence translation, which seems to be the essential function of trans-translation. The polypeptide is SsrA-binding protein (Thermosipho melanesiensis (strain DSM 12029 / CIP 104789 / BI429)).